Reading from the N-terminus, the 780-residue chain is Nuclear cap-binding protein subunit 1 (780 aa).

The interval methionine 1–histidine 25 is disordered. Serine 29 is modified (phosphoserine). One can recognise an MIF4G domain in the interval alanine 34 to aspartate 249. Positions alanine 738–lysine 780 are disordered.

It belongs to the NCBP1 family. As to quaternary structure, component of the nuclear cap-binding complex (CBC), a heterodimer composed of cbc1 and cbc2 that interacts with capped RNAs.

Its subcellular location is the cytoplasm. The protein resides in the perinuclear region. It is found in the nucleus. Component of the CBC complex, which binds cotranscriptionally to the 5'-cap of pre-mRNAs and is involved in maturation, export and degradation of nuclear mRNAs. This Schizosaccharomyces pombe (strain 972 / ATCC 24843) (Fission yeast) protein is Nuclear cap-binding protein subunit 1 (cbc1).